We begin with the raw amino-acid sequence, 351 residues long: Minor outer capsid protein P9 (351 aa).

A disordered region spans residues 245–310 (GGVPAALPQP…VPSGNVSARG (66 aa)). Residues 285 to 297 (MIRKKVETSKDGP) are compositionally biased toward basic and acidic residues.

The protein belongs to the phytoreovirus minor outer capsid protein P9 family.

It localises to the virion. Its subcellular location is the host cytoplasm. Minor outer capsid protein. This is Minor outer capsid protein P9 from Rice dwarf virus (isolate Akita) (RDV).